The following is a 269-amino-acid chain: 3-deoxy-manno-octulosonate cytidylyltransferase (269 aa).

It belongs to the KdsB family.

It is found in the cytoplasm. It catalyses the reaction 3-deoxy-alpha-D-manno-oct-2-ulosonate + CTP = CMP-3-deoxy-beta-D-manno-octulosonate + diphosphate. The protein operates within nucleotide-sugar biosynthesis; CMP-3-deoxy-D-manno-octulosonate biosynthesis; CMP-3-deoxy-D-manno-octulosonate from 3-deoxy-D-manno-octulosonate and CTP: step 1/1. It functions in the pathway bacterial outer membrane biogenesis; lipopolysaccharide biosynthesis. In terms of biological role, activates KDO (a required 8-carbon sugar) for incorporation into bacterial lipopolysaccharide in Gram-negative bacteria. This is 3-deoxy-manno-octulosonate cytidylyltransferase from Cupriavidus taiwanensis (strain DSM 17343 / BCRC 17206 / CCUG 44338 / CIP 107171 / LMG 19424 / R1) (Ralstonia taiwanensis (strain LMG 19424)).